Consider the following 316-residue polypeptide: Ribosomal RNA small subunit methyltransferase H (316 aa).

S-adenosyl-L-methionine-binding positions include 35 to 37, Asp-55, Tyr-79, Asp-100, and Gln-107; that span reads GGH.

This sequence belongs to the methyltransferase superfamily. RsmH family.

Its subcellular location is the cytoplasm. The catalysed reaction is cytidine(1402) in 16S rRNA + S-adenosyl-L-methionine = N(4)-methylcytidine(1402) in 16S rRNA + S-adenosyl-L-homocysteine + H(+). Functionally, specifically methylates the N4 position of cytidine in position 1402 (C1402) of 16S rRNA. The sequence is that of Ribosomal RNA small subunit methyltransferase H from Nitrosospira multiformis (strain ATCC 25196 / NCIMB 11849 / C 71).